Consider the following 133-residue polypeptide: Antifungal protein ginkbilobin-like protein 1 (133 aa).

The first 24 residues, 1–24 (MSMGSFGFALAVMVLAVLVASAAG), serve as a signal peptide directing secretion. Residues 28 to 133 (TNFVSSACNT…CFIRYEQYSI (106 aa)) enclose the Gnk2-homologous domain. Disulfide bonds link cysteine 35/cysteine 111, cysteine 87/cysteine 96, and cysteine 99/cysteine 124. Asparagine 36 provides a ligand contact to alpha-D-mannopyranose. The alpha-D-mannopyranose site is built by arginine 118 and glutamate 129.

Functionally, exerts antifungal activity through its carbohydrate-binding specificity. This is Antifungal protein ginkbilobin-like protein 1 from Picea sitchensis (Sitka spruce).